The chain runs to 367 residues: UDP-N-acetylglucosamine--N-acetylmuramyl-(pentapeptide) pyrophosphoryl-undecaprenol N-acetylglucosamine transferase (367 aa).

UDP-N-acetyl-alpha-D-glucosamine-binding positions include threonine 15 to glycine 17, asparagine 127, arginine 163, serine 191, isoleucine 249, and glutamine 294.

The protein belongs to the glycosyltransferase 28 family. MurG subfamily.

The protein resides in the cell inner membrane. The enzyme catalyses di-trans,octa-cis-undecaprenyl diphospho-N-acetyl-alpha-D-muramoyl-L-alanyl-D-glutamyl-meso-2,6-diaminopimeloyl-D-alanyl-D-alanine + UDP-N-acetyl-alpha-D-glucosamine = di-trans,octa-cis-undecaprenyl diphospho-[N-acetyl-alpha-D-glucosaminyl-(1-&gt;4)]-N-acetyl-alpha-D-muramoyl-L-alanyl-D-glutamyl-meso-2,6-diaminopimeloyl-D-alanyl-D-alanine + UDP + H(+). It participates in cell wall biogenesis; peptidoglycan biosynthesis. Functionally, cell wall formation. Catalyzes the transfer of a GlcNAc subunit on undecaprenyl-pyrophosphoryl-MurNAc-pentapeptide (lipid intermediate I) to form undecaprenyl-pyrophosphoryl-MurNAc-(pentapeptide)GlcNAc (lipid intermediate II). The chain is UDP-N-acetylglucosamine--N-acetylmuramyl-(pentapeptide) pyrophosphoryl-undecaprenol N-acetylglucosamine transferase from Burkholderia pseudomallei (strain 1710b).